Reading from the N-terminus, the 66-residue chain is Large ribosomal subunit protein bL35c (66 aa).

This sequence belongs to the bacterial ribosomal protein bL35 family.

It is found in the plastid. The protein resides in the chloroplast. The protein is Large ribosomal subunit protein bL35c of Guillardia theta (Cryptophyte).